Consider the following 329-residue polypeptide: UDP-glucose 4-epimerase (329 aa).

Residues Tyr-13–Val-14, His-33–Gly-38, Asp-53–Ile-54, Phe-76–Ser-80, Asn-95, Thr-120, Tyr-144, Lys-148, and Phe-172 each bind NAD(+). Residues Thr-120 and Tyr-144 each coordinate substrate. The Proton acceptor role is filled by Tyr-144. Substrate contacts are provided by residues Asn-173, His-190–Leu-191, Ser-207–Tyr-209, Arg-221, and Arg-281–Asp-284.

The protein belongs to the NAD(P)-dependent epimerase/dehydratase family. As to quaternary structure, homodimer. NAD(+) serves as cofactor.

It catalyses the reaction UDP-alpha-D-glucose = UDP-alpha-D-galactose. It participates in carbohydrate metabolism; galactose metabolism. Its function is as follows. Involved in the metabolism of galactose. Catalyzes the conversion of UDP-galactose (UDP-Gal) to UDP-glucose (UDP-Glc) through a mechanism involving the transient reduction of NAD. In Streptomyces lividans, this protein is UDP-glucose 4-epimerase (galE).